We begin with the raw amino-acid sequence, 688 residues long: Elongation factor G (688 aa).

The 275-residue stretch at 6–280 (KLFRNFGIMA…AVVDFLPSPI (275 aa)) folds into the tr-type G domain. GTP-binding positions include 15–22 (AHIDAGKT), 79–83 (DTPGH), and 133–136 (NKMD).

The protein belongs to the TRAFAC class translation factor GTPase superfamily. Classic translation factor GTPase family. EF-G/EF-2 subfamily.

The protein resides in the cytoplasm. Its function is as follows. Catalyzes the GTP-dependent ribosomal translocation step during translation elongation. During this step, the ribosome changes from the pre-translocational (PRE) to the post-translocational (POST) state as the newly formed A-site-bound peptidyl-tRNA and P-site-bound deacylated tRNA move to the P and E sites, respectively. Catalyzes the coordinated movement of the two tRNA molecules, the mRNA and conformational changes in the ribosome. This chain is Elongation factor G, found in Ureaplasma urealyticum serovar 10 (strain ATCC 33699 / Western).